A 540-amino-acid polypeptide reads, in one-letter code: Glucose-6-phosphate isomerase (540 aa).

Glu350 acts as the Proton donor in catalysis. Catalysis depends on residues His381 and Lys503.

The protein belongs to the GPI family.

The protein localises to the cytoplasm. It catalyses the reaction alpha-D-glucose 6-phosphate = beta-D-fructose 6-phosphate. The protein operates within carbohydrate biosynthesis; gluconeogenesis. It functions in the pathway carbohydrate degradation; glycolysis; D-glyceraldehyde 3-phosphate and glycerone phosphate from D-glucose: step 2/4. Catalyzes the reversible isomerization of glucose-6-phosphate to fructose-6-phosphate. This chain is Glucose-6-phosphate isomerase, found in Burkholderia pseudomallei (strain 1106a).